Here is a 278-residue protein sequence, read N- to C-terminus: Juvenile hormone acid O-methyltransferase (278 aa).

Belongs to the methyltransferase superfamily. In terms of tissue distribution, specifically expressed in the corpora allata (CA).

The catalysed reaction is (2E,6E)-farnesoate + S-adenosyl-L-methionine = methyl (2E,6E)-farnesoate + S-adenosyl-L-homocysteine. It carries out the reaction juvenile hormone III carboxylate + S-adenosyl-L-methionine = juvenile hormone III + S-adenosyl-L-homocysteine. Its function is as follows. O-methyltransferase that transfers a methyl group from S-adenosyl-L-methionine (SAM) to the carboxyl group of juvenile hormone acids to produce active juvenile hormones in the corpora allata, the last step during juvenile hormone biosynthesis. Also able to methylate farnesoate to methyl farnesoate. The protein is Juvenile hormone acid O-methyltransferase of Bombyx mori (Silk moth).